The following is an 813-amino-acid chain: MGWRPRRARGTPLLLLLLLLLLWPVPGAGVLQGHIPGQPVTPHWVLDGQPWRTVSLEEPVSKPDMGLVALEAEGQELLLELEKNHRLLAPGYIETHYGPDGQPVVLAPNHTDHCHYQGRVRGFPDSWVVLCTCSGMSGLITLSRNASYYLRPWPPRGSKDFSTHEIFRMEQLLTWKGTCGHRDPGNKAGMTSLPGGPQSRGRREARRTRKYLELYIVADHTLFLTRHRNLNHTKQRLLEVANYVDQLLRTLDIQVALTGLEVWTERDRSRVTQDANATLWAFLQWRRGLWAQRPHDSAQLLTGRAFQGATVGLAPVEGMCRAESSGGVSTDHSELPIGAAATMAHEIGHSLGLSHDPDGCCVEAAAESGGCVMAAATGHPFPRVFSACSRRQLRAFFRKGGGACLSNAPDPGLPVPPALCGNGFVEAGEECDCGPGQECRDLCCFAHNCSLRPGAQCAHGDCCVRCLLKPAGALCRQAMGDCDLPEFCTGTSSHCPPDVYLLDGSPCARGSGYCWDGACPTLEQQCQQLWGPGSHPAPEACFQVVNSAGDAHGNCGQDSEGHFLPCAGRDALCGKLQCQGGKPSLLAPHMVPVDSTVHLDGQEVTCRGALALPSAQLDLLGLGLVEPGTQCGPRMVCQSRRCRKNAFQELQRCLTACHSHGVCNSNHNCHCAPGWAPPFCDKPGFGGSMDSGPVQAENHDTFLLAMLLSVLLPLLPGAGLAWCCYRLPGAHLQRCSWGCRRDPACSGPKDGPHRDHPLGGVHPMELGPTATGQPWPLDPENSHEPSSHPEKPLPAVSPDPQADQVQMPRSCLW.

The first 29 residues, 1–29 (MGWRPRRARGTPLLLLLLLLLLWPVPGAG), serve as a signal peptide directing secretion. The propeptide occupies 30 to 203 (VLQGHIPGQP…PGGPQSRGRR (174 aa)). The Extracellular segment spans residues 30–701 (VLQGHIPGQP…GPVQAENHDT (672 aa)). N109 carries N-linked (GlcNAc...) asparagine glycosylation. Residues 131-138 (CTCSGMSG) carry the Cysteine switch motif. A Zn(2+)-binding site is contributed by C133. N145 carries N-linked (GlcNAc...) asparagine glycosylation. The tract at residues 184-205 (PGNKAGMTSLPGGPQSRGRREA) is disordered. Residues 210–409 (KYLELYIVAD…GGGACLSNAP (200 aa)) form the Peptidase M12B domain. 2 N-linked (GlcNAc...) asparagine glycosylation sites follow: N231 and N276. 3 disulfide bridges follow: C320/C404, C360/C388, and C361/C371. H345 lines the Zn(2+) pocket. E346 is a catalytic residue. Zn(2+) is bound by residues H349 and H355. A Disintegrin domain is found at 417-503 (PALCGNGFVE…HCPPDVYLLD (87 aa)). N448 is a glycosylation site (N-linked (GlcNAc...) asparagine). Intrachain disulfides connect C475-C495, C653-C663, C657-C669, and C671-C680. In terms of domain architecture, EGF-like spans 649–681 (ELQRCLTACHSHGVCNSNHNCHCAPGWAPPFCD). Residues 702–722 (FLLAMLLSVLLPLLPGAGLAW) form a helical membrane-spanning segment. Topologically, residues 723 to 813 (CCYRLPGAHL…QVQMPRSCLW (91 aa)) are cytoplasmic. Positions 746–813 (SGPKDGPHRD…QVQMPRSCLW (68 aa)) are disordered. Positions 780–791 (ENSHEPSSHPEK) are enriched in basic and acidic residues.

Zn(2+) is required as a cofactor. In terms of processing, the precursor is cleaved by a furin endopeptidase. As to expression, expressed in all tissues, except liver, with high expression in placenta, lung, spleen and veins.

The protein localises to the membrane. The chain is Disintegrin and metalloproteinase domain-containing protein 33 (ADAM33) from Homo sapiens (Human).